Reading from the N-terminus, the 135-residue chain is Methylglyoxal synthase (135 aa).

Positions 1–135 (MPKRRRIALI…AQPDPKEIHA (135 aa)) constitute an MGS-like domain. Residues His12, Lys16, 38–41 (TGTT), and 58–59 (SG) contribute to the substrate site. Catalysis depends on Asp64, which acts as the Proton donor/acceptor. His91 is a substrate binding site.

Belongs to the methylglyoxal synthase family.

It carries out the reaction dihydroxyacetone phosphate = methylglyoxal + phosphate. In terms of biological role, catalyzes the formation of methylglyoxal from dihydroxyacetone phosphate. This is Methylglyoxal synthase from Ralstonia nicotianae (strain ATCC BAA-1114 / GMI1000) (Ralstonia solanacearum).